The chain runs to 325 residues: GTPase Era (325 aa).

An Era-type G domain is found at 30–198 (HCGFVAIVGR…KKHVRDHLPK (169 aa)). Positions 38 to 45 (GRPNVGKS) are G1. 38–45 (GRPNVGKS) contacts GTP. The segment at 64–68 (QTTRH) is G2. The interval 85 to 88 (DTPG) is G3. Residues 85–89 (DTPGL) and 147–150 (NKVD) contribute to the GTP site. The segment at 147-150 (NKVD) is G4. The G5 stretch occupies residues 177 to 179 (ISA). Residues 221-307 (VREKLMRFTG…YLETWVKVKS (87 aa)) enclose the KH type-2 domain.

This sequence belongs to the TRAFAC class TrmE-Era-EngA-EngB-Septin-like GTPase superfamily. Era GTPase family. Monomer.

The protein resides in the cytoplasm. It localises to the cell inner membrane. Its function is as follows. An essential GTPase that binds both GDP and GTP, with rapid nucleotide exchange. Plays a role in 16S rRNA processing and 30S ribosomal subunit biogenesis and possibly also in cell cycle regulation and energy metabolism. The chain is GTPase Era from Vibrio cholerae serotype O1 (strain ATCC 39315 / El Tor Inaba N16961).